Reading from the N-terminus, the 396-residue chain is Alpha-1-antitrypsin (396 aa).

Residues 1-2 (HV) form the signal peptide. Residues 1–24 (HVEDPQGDAAQKTDTSHHDQEHST) are disordered. Positions 14 to 24 (DTSHHDQEHST) are enriched in basic and acidic residues. S16 is modified (phosphoserine). 4 N-linked (GlcNAc...) asparagine glycosylation sites follow: N48, N85, N123, and N249. The RCL stretch occupies residues 351 to 370 (GAMFLEAIPMSIPPEVKFNK). The residue at position 361 (S361) is a Phosphoserine.

It belongs to the serpin family. As to quaternary structure, interacts with CELA2A. Interacts with ERGIC3 and LMAN1/ERGIC53. Interacts with PRSS1/Trypsin. Plasma.

The protein resides in the secreted. Inhibitor of serine proteases. Its primary target is elastase, but it also has a moderate affinity for plasmin and thrombin. Inhibits trypsin, chymotrypsin and plasminogen activator. The protein is Alpha-1-antitrypsin (SERPINA1) of Chlorocebus aethiops (Green monkey).